We begin with the raw amino-acid sequence, 279 residues long: uncharacterized protein (279 aa).

A Reverse transcriptase domain is found at 1 to 87; it reads MRVNGRNLTN…DEYIYLGRQI (87 aa).

This is an uncharacterized protein from Caenorhabditis elegans.